The chain runs to 433 residues: FAD-dependent monooxygenase notI (433 aa).

The FAD site is built by glutamate 45 and arginine 117. The active site involves arginine 195. 2 residues coordinate FAD: aspartate 314 and alanine 327.

The protein belongs to the paxM FAD-dependent monooxygenase family. It depends on FAD as a cofactor.

It functions in the pathway alkaloid biosynthesis. In terms of biological role, FAD-dependent monooxygenase; part of the gene cluster that mediates the biosynthesis of notoamide, a fungal indole alkaloid that belongs to a family of natural products containing a characteristic bicyclo[2.2.2]diazaoctane core. The first step of notoamide biosynthesis involves coupling of L-proline and L-tryptophan by the bimodular NRPS notE, to produce cyclo-L-tryptophan-L-proline called brevianamide F. The reverse prenyltransferase notF then acts as a deoxybrevianamide E synthase and converts brevianamide F to deoxybrevianamide E via reverse prenylation at C-2 of the indole ring leading to the bicyclo[2.2.2]diazaoctane core. Deoxybrevianamide E is further hydroxylated at C-6 of the indole ring, likely catalyzed by the cytochrome P450 monooxygenase notG, to yield 6-hydroxy-deoxybrevianamide E. 6-hydroxy-deoxybrevianamide E is a specific substrate of the prenyltransferase notC for normal prenylation at C-7 to produce 6-hydroxy-7-prenyl-deoxybrevianamide, also called notoamide S. As the proposed pivotal branching point in notoamide biosynthesis, notoamide S can be diverted to notoamide E through an oxidative pyran ring closure putatively catalyzed by either notH cytochrome P450 monooxygenase or the notD FAD-linked oxidoreductase. This step would be followed by an indole 2,3-epoxidation-initiated pinacol-like rearrangement catalyzed by the notB FAD-dependent monooxygenase leading to the formation of notoamide C and notoamide D. On the other hand notoamide S is converted to notoamide T by notH (or notD), a bifunctional oxidase that also functions as the intramolecular Diels-Alderase responsible for generation of (+)-notoamide T. To generate antipodal (-)-notoaminide T, notH' (or notD') in Aspergillus versicolor is expected to catalyze a Diels-Alder reaction leading to the opposite stereochemistry. The remaining oxidoreductase notD (or notH) likely catalyzes the oxidative pyran ring formation to yield (+)-stephacidin A. The FAD-dependent monooxygenase notI is highly similar to notB and is predicted to catalyze a similar conversion from (+)-stephacidin A to (-)-notoamide B via the 2,3-epoxidation of (+)-stephacidin A followed by a pinacol-type rearrangement. Finally, it remains unclear which enzyme could be responsible for the final hydroxylation steps leading to notoamide A and sclerotiamide. This is FAD-dependent monooxygenase notI from Aspergillus sp. (strain MF297-2).